An 83-amino-acid chain; its full sequence is Small ribosomal subunit protein bS16 (83 aa).

The protein belongs to the bacterial ribosomal protein bS16 family.

This is Small ribosomal subunit protein bS16 from Shewanella halifaxensis (strain HAW-EB4).